The chain runs to 320 residues: MKTEASPGRLHEDVKLIFDKKAPSGRSSSCSSSSSSSSGSSYSSSRGSRSSRRSRTSSSSRSSSSGSSSSSNSRSRSRPRCSGRVHCRHRHRSPPRRYRARSRSYSPSPESSSRRRHYYRRSRSPYRYSRRYRRSPSRSRSRSPPHWRGSRFIGRYRCRFSQSPRRSPRPYRSRSRSRERSIRLSLEEKKYLLNVAKANAARILGVQNLELPESLKEMEQQEERKRRSSSDEEERVRVDLAAQKTPAQVNGGAADDEAETAQTSPKRKQIVFSNNNAIAKPSSSPTLSDSKVTSRADIVPYKRPFGQWVPIGKSSSANKR.

Positions 1-22 (MKTEASPGRLHEDVKLIFDKKA) are enriched in basic and acidic residues. Disordered regions lie at residues 1 to 180 (MKTE…SRER) and 215 to 299 (LKEM…ADIV). Composition is skewed to low complexity over residues 24-48 (SGRSSSCSSSSSSSSGSSYSSSRGS) and 56-74 (TSSSSRSSSSGSSSSSNSR). Composition is skewed to basic residues over residues 75 to 102 (SRSRPRCSGRVHCRHRHRSPPRRYRARS), 114 to 158 (RRRH…RYRC), and 166 to 175 (RSPRPYRSRS). A phosphoserine mark is found at S135 and S137. The span at 215-238 (LKEMEQQEERKRRSSSDEEERVRV) shows a compositional bias: basic and acidic residues. Over residues 271–293 (VFSNNNAIAKPSSSPTLSDSKVT) the composition is skewed to polar residues.

This sequence belongs to the RSRP family. Phosphorylated. Phosphorylation at Ser-135 and Ser-137 mediates the interaction with spliceosome proteins.

It is found in the nucleus. Probably acts as a spliceosomal factor that contributes to spliceosome assembly and regulates the isoform switching of proteins such as PARP6. The chain is Arginine/serine-rich protein 1 (rsrp1) from Danio rerio (Zebrafish).